We begin with the raw amino-acid sequence, 496 residues long: Glycine receptor subunit beta (496 aa).

The signal sequence occupies residues 1-22 (MKFSLAISFFILMSLLFEDACA). The Extracellular portion of the chain corresponds to 23-268 (KEKSSKKGKG…IFTLRRQVGF (246 aa)). The interval 32-53 (GKKKQYLCPSQQSPEDLARVPP) is disordered. The N-linked (GlcNAc...) asparagine glycan is linked to asparagine 54. 2 residues coordinate glycine: arginine 108 and serine 174. Cysteine 183 and cysteine 197 are oxidised to a cystine. An N-linked (GlcNAc...) asparagine glycan is attached at asparagine 242. Cysteine 243 and cysteine 255 are joined by a disulfide. Threonine 250 serves as a coordination point for glycine. A helical membrane pass occupies residues 269–289 (YMMGVYAPTLLIVVLSWLSFW). Topologically, residues 290 to 294 (INPDA) are cytoplasmic. A helical membrane pass occupies residues 295-315 (SAARVPLGIFSVLSLASECTT). Topologically, residues 316-327 (LAAELPKVSYVK) are extracellular. The chain crosses the membrane as a helical span at residues 328–349 (ALDVWLIACLLFGFASLVEYAV). The Cytoplasmic portion of the chain corresponds to 350-471 (VQVMLNNPKR…KPVIPTAAKR (122 aa)). Threonine 391 is subject to Phosphothreonine. The helical transmembrane segment at 472–495 (IDLYARALFPFCFLFFNVIYWSIY) threads the bilayer. Leucine 496 is a topological domain (extracellular).

It belongs to the ligand-gated ion channel (TC 1.A.9) family. Glycine receptor (TC 1.A.9.3) subfamily. GLRB sub-subfamily. As to quaternary structure, forms heteropentamers with glycin receptor alpha subunits. Heteropentamers with GLRA1 can be composed of two GLRA1 and three GLRB subunits, or three GLRA1 and two GLRB subunits, or four GLRA1 subunits and one GLRB subunit. Forms heteropentamers with GLRA2. Functional GLRB-GLRA2 heteropentamers contain four GLRA2 subunits and one GLRB subunit, although alternative subunit composition cannot be excluded. Forms a heteropentamer with GLRA3. Interacts with GPHN. In terms of tissue distribution, detected in spinal cord, brain and brain stem, especially in the periolivary region, spinal nuclei, trigeminal nucleus, medulla oblongata, pons and midbrain. Detected in the inner plexiform layer of the retina (at protein level). High levels of expression in cortex, hippocampus, thalamus and cerebellum. Detected in spinal cord.

The protein localises to the postsynaptic cell membrane. The protein resides in the synapse. It localises to the cell projection. Its subcellular location is the dendrite. It is found in the cell membrane. The protein localises to the cytoplasm. The enzyme catalyses chloride(in) = chloride(out). Channel opening is triggered by extracellular glycine. Heteropentameric channels composed of GLRB and GLRA1 are activated by lower glycine levels than homopentameric GLRA1. Functionally, subunit of heteromeric glycine-gated chloride channels. Plays an important role in the down-regulation of neuronal excitability. Contributes to the generation of inhibitory postsynaptic currents. This chain is Glycine receptor subunit beta (Glrb), found in Mus musculus (Mouse).